A 191-amino-acid polypeptide reads, in one-letter code: Guanylate kinase (191 aa).

Residues 9–187 (GQLIVITGPS…SLIALETAIF (179 aa)) form the Guanylate kinase-like domain. 16 to 23 (GPSGVGKG) is an ATP binding site.

The protein belongs to the guanylate kinase family.

It localises to the cytoplasm. It carries out the reaction GMP + ATP = GDP + ADP. In terms of biological role, essential for recycling GMP and indirectly, cGMP. In Thermosynechococcus vestitus (strain NIES-2133 / IAM M-273 / BP-1), this protein is Guanylate kinase.